Consider the following 758-residue polypeptide: Dachshund homolog 1 (758 aa).

Disordered stretches follow at residues 1 to 105 (MAVP…SNCN) and 134 to 185 (INAS…TPQN). A compositionally biased stretch (low complexity) spans 20–53 (ISTSASSSGTTTSTSSATSSPAPSIGPPASSGPT). The segment covering 73-102 (TGGGGGGGGSGGGGGSSGNGGGGGGGGGGS) has biased composition (gly residues). Residues 140 to 163 (SSSSSSSSSSSSSSSSSSSSSSSS) are compositionally biased toward low complexity. Positions 174 to 185 (STPSPVENTPQN) are enriched in polar residues. The segment at 189-275 (KMVDLRGAKV…LISRKDFETL (87 aa)) is DACHbox-N. The interaction with SIX6 and HDAC3 stretch occupies residues 189–384 (KMVDLRGAKV…VGSSDGSWDK (196 aa)). Disordered regions lie at residues 280–302 (TNASSRPGRPPKRTQSVTSPENS), 358–414 (SNNQ…PLSH), 474–532 (SPPS…RIPV), and 544–564 (MGLSPNVLPGPKEGDLAGHDM). Composition is skewed to polar residues over residues 292–301 (RTQSVTSPEN), 358–380 (SNNQHGADSENGDMNSSVGSSDG), and 387–399 (LPSSPSQGPQASI). The residue at position 491 (serine 491) is a Phosphoserine. Low complexity predominate over residues 506-524 (SHPSSHRSSSVSSSPARTE). The span at 555-564 (KEGDLAGHDM) shows a compositional bias: basic and acidic residues. A DACHbox-C region spans residues 616-696 (SSIETLLTNI…KAKRKLQEAL (81 aa)). Residues 627-706 (GLLKVAIDNA…EFETKRREQA (80 aa)) are interaction with SIN3A. Positions 630-718 (KVAIDNARAQ…TLKQAASTDS (89 aa)) form a coiled coil.

It belongs to the DACH/dachshund family. As to quaternary structure, interacts with SIX1, SIX6 and EYA3. Interacts with NCOR1 and HDAC3 through its N-terminus. Interacts with SIN3A through its C-terminus. Interacts with SMAD3 and SMAD4. In terms of tissue distribution, widely expressed. Isoform 2 is found in brain, heart, kidney, liver, leukocytes and spleen. Isoform 3 is found in liver and heart. Isoform 4 is found in spleen.

The protein localises to the nucleus. Functionally, transcription factor that is involved in regulation of organogenesis. Seems to be a regulator of SIX1, SIX6 and probably SIX5. Corepression of precursor cell proliferation in myoblasts by SIX1 is switched to coactivation through recruitment of EYA3 to the SIX1-DACH1 complex. Transcriptional activation also seems to involve association of CREBBP. Seems to act as a corepressor of SIX6 in regulating proliferation by directly repressing cyclin-dependent kinase inhibitors, including the p27Kip1 promoter. Inhibits TGF-beta signaling through interaction with SMAD4 and NCOR1. Binds to chromatin DNA via its DACHbox-N domain. The protein is Dachshund homolog 1 (DACH1) of Homo sapiens (Human).